The following is a 195-amino-acid chain: Thymidine kinase (195 aa).

Residues Gly-15–Ser-22 and Asp-88–Gln-91 contribute to the ATP site. Glu-89 acts as the Proton acceptor in catalysis. Zn(2+) contacts are provided by Cys-145, Cys-148, Cys-183, and Cys-186.

Belongs to the thymidine kinase family. As to quaternary structure, homotetramer.

The protein resides in the cytoplasm. The catalysed reaction is thymidine + ATP = dTMP + ADP + H(+). This Bacillus cereus (strain AH187) protein is Thymidine kinase.